A 385-amino-acid polypeptide reads, in one-letter code: Mannitol-1-phosphate 5-dehydrogenase (385 aa).

3–14 (DVHFGAGNIGRG) is a binding site for NAD(+).

This sequence belongs to the mannitol dehydrogenase family.

The catalysed reaction is D-mannitol 1-phosphate + NAD(+) = beta-D-fructose 6-phosphate + NADH + H(+). The polypeptide is Mannitol-1-phosphate 5-dehydrogenase (Lactiplantibacillus plantarum (strain ATCC BAA-793 / NCIMB 8826 / WCFS1) (Lactobacillus plantarum)).